A 350-amino-acid polypeptide reads, in one-letter code: Solute carrier family 35 member E4 (350 aa).

The next 8 membrane-spanning stretches (helical) occupy residues 40 to 60 (VLGQ…LLAG), 79 to 99 (PLLL…WGAQ), 110 to 130 (VLLL…GLST), 135 to 155 (LAQL…ALLL), 218 to 238 (VTLL…AALV), 258 to 278 (VLLS…LLAL), 279 to 299 (TSAL…LILS), and 301 to 321 (LLFG…TLSG). An EamA domain is found at 125–179 (NVGLSTVPLDLAQLATTTTPLFTLALSALLLGRRHHPLQFAAMGPLCLGAACSLA).

This sequence belongs to the TPT transporter family. SLC35E subfamily.

It is found in the membrane. Putative transporter. The protein is Solute carrier family 35 member E4 (Slc35e4) of Rattus norvegicus (Rat).